The chain runs to 168 residues: CASP-like protein 1U1 (168 aa).

The Cytoplasmic portion of the chain corresponds to 1-6 (MDGAAR). Residues 7–27 (AVSLFFRIAVVGLSVAAAVVM) traverse the membrane as a helical segment. Residues 28–49 (ATASQAFPFNYGGAVSYTKYPA) are Extracellular-facing. Residues 50-70 (FVYFVVAAVVSAVCSAAALYL) traverse the membrane as a helical segment. At 71–80 (SVVREAAAGW) the chain is on the cytoplasmic side. The chain crosses the membrane as a helical span at residues 81–101 (AVALLDVVTMGLLFSAAGAVF). Residues 102-138 (AVRRMAPLYLGVAGADTVAGRWVNGEFCHAAGAFCWR) are Extracellular-facing. The helical transmembrane segment at 139-159 (VTTSAIICAFAAAAVSVAVLT) threads the bilayer. Over 160 to 168 (KGARHRGKH) the chain is Cytoplasmic.

Belongs to the Casparian strip membrane proteins (CASP) family. In terms of assembly, homodimer and heterodimers.

It localises to the cell membrane. The protein is CASP-like protein 1U1 of Oryza sativa subsp. japonica (Rice).